Reading from the N-terminus, the 617-residue chain is Protein fem-1 homolog C (617 aa).

At Met-1 the chain carries N-acetylmethionine. ANK repeat units follow at residues 2 to 31, 40 to 70, 82 to 111, 115 to 144, 148 to 177, 181 to 210, and 213 to 242; these read DLKT…KEEV, NGAT…SIEV, EGAP…SVNN, TNST…DLEV, HGHT…DVNR, KGNT…KMEK, and YGMT…TSKT. TPR repeat units follow at residues 245 to 279 and 338 to 371; these read INAL…RYSD and SYYI…QQSN. ANK repeat units lie at residues 481-523 and 527-556; these read NNFS…DVNV and DDNS…HFDA.

The protein belongs to the fem-1 family. Component of a Cul2-RING (CRL2) E3 ubiquitin-protein ligase complex, also named ECS (Elongin BC-CUL2/5-SOCS-box protein) complex, composed of CUL2, Elongin BC (ELOB and ELOC), RBX1 and substrate-specific adapter FEM1C. As to expression, widely expressed. Highly expressed in kidney, cardiac tissue, skeletal muscle and testis. Expressed at lower levels in other tissues, including cartilage.

It participates in protein modification; protein ubiquitination. Substrate-recognition component of a Cul2-RING (CRL2) E3 ubiquitin-protein ligase complex of the DesCEND (destruction via C-end degrons) pathway, which recognizes a C-degron located at the extreme C terminus of target proteins, leading to their ubiquitination and degradation. The C-degron recognized by the DesCEND pathway is usually a motif of less than ten residues and can be present in full-length proteins, truncated proteins or proteolytically cleaved forms. The CRL2(FEM1C) complex specifically recognizes proteins with an arginine at the C-terminus: recognizes and binds proteins ending with -Lys/Arg-Xaa-Arg and -Lys/Arg-Xaa-Xaa-Arg C-degrons, such as SIL1 or OR51B2, leading to their ubiquitination and degradation. The CRL2(FEM1C) complex mediates ubiquitination and degradation of truncated MSRB1/SEPX1 selenoproteins produced by failed UGA/Sec decoding. Promotes ubiquitination and degradation of SLBP. The polypeptide is Protein fem-1 homolog C (Homo sapiens (Human)).